Here is a 426-residue protein sequence, read N- to C-terminus: Proline--tRNA ligase (426 aa).

The protein belongs to the class-II aminoacyl-tRNA synthetase family. ProS type 2 subfamily. Homodimer.

The protein resides in the cytoplasm. The enzyme catalyses tRNA(Pro) + L-proline + ATP = L-prolyl-tRNA(Pro) + AMP + diphosphate. Catalyzes the attachment of proline to tRNA(Pro) in a two-step reaction: proline is first activated by ATP to form Pro-AMP and then transferred to the acceptor end of tRNA(Pro). The chain is Proline--tRNA ligase from Ehrlichia ruminantium (strain Gardel).